A 376-amino-acid polypeptide reads, in one-letter code: Queuine tRNA-ribosyltransferase (376 aa).

Asp93 (proton acceptor) is an active-site residue. Residues 93 to 97, Asp147, Gln190, and Gly217 contribute to the substrate site; that span reads DSGGF. The RNA binding stretch occupies residues 248–254; it reads GVGTPDD. Catalysis depends on Asp267, which acts as the Nucleophile. Residues 272-276 form an RNA binding; important for wobble base 34 recognition region; it reads TRSGR.

The protein belongs to the queuine tRNA-ribosyltransferase family. Homodimer. Within each dimer, one monomer is responsible for RNA recognition and catalysis, while the other monomer binds to the replacement base PreQ1.

The catalysed reaction is 7-aminomethyl-7-carbaguanine + guanosine(34) in tRNA = 7-aminomethyl-7-carbaguanosine(34) in tRNA + guanine. The protein operates within tRNA modification; tRNA-queuosine biosynthesis. In terms of biological role, catalyzes the base-exchange of a guanine (G) residue with the queuine precursor 7-aminomethyl-7-deazaguanine (PreQ1) at position 34 (anticodon wobble position) in tRNAs with GU(N) anticodons (tRNA-Asp, -Asn, -His and -Tyr). Catalysis occurs through a double-displacement mechanism. The nucleophile active site attacks the C1' of nucleotide 34 to detach the guanine base from the RNA, forming a covalent enzyme-RNA intermediate. The proton acceptor active site deprotonates the incoming PreQ1, allowing a nucleophilic attack on the C1' of the ribose to form the product. After dissociation, two additional enzymatic reactions on the tRNA convert PreQ1 to queuine (Q), resulting in the hypermodified nucleoside queuosine (7-(((4,5-cis-dihydroxy-2-cyclopenten-1-yl)amino)methyl)-7-deazaguanosine). This chain is Queuine tRNA-ribosyltransferase, found in Agrobacterium fabrum (strain C58 / ATCC 33970) (Agrobacterium tumefaciens (strain C58)).